The following is a 70-amino-acid chain: uncharacterized protein (70 aa).

This is an uncharacterized protein from Methanocaldococcus jannaschii (strain ATCC 43067 / DSM 2661 / JAL-1 / JCM 10045 / NBRC 100440) (Methanococcus jannaschii).